Reading from the N-terminus, the 280-residue chain is Manganese transport system membrane protein MntC (280 aa).

A run of 9 helical transmembrane segments spans residues 16 to 36 (ALITSVTVGIVSGVIGSFIIL), 41 to 61 (LMGDAISHAVLPGVAISYMMG), 62 to 82 (MNFFIGAATFGIAAALGIGFV), 92 to 112 (TAIGIVFSAFFALGIILISFA), 137 to 157 (TIIIAIIVISLVALFYKEFLV), 168 to 188 (YGLNVKFLHYFLMLLLTLVTV), 193 to 213 (TVGIILVVAMLITPAATAYLL), 221 to 241 (IVLASTFGAVSAIIGLYFSYI), and 244 to 264 (LASGAAMVLVATIIFFIAFLF).

The protein belongs to the ABC-3 integral membrane protein family.

It localises to the cell membrane. Its function is as follows. This protein is probably a component of a manganese permease, a binding protein-dependent, ATP-driven transport system. The polypeptide is Manganese transport system membrane protein MntC (mntC) (Listeria monocytogenes serovar 1/2a (strain ATCC BAA-679 / EGD-e)).